The primary structure comprises 147 residues: Hemoglobin subunit beta (147 aa).

Position 2 is an N-acetylserine (S2). The Globin domain occupies 3–147; it reads FLSAEEKNLV…VASALAHRYH (145 aa). Phosphoserine is present on S45. Position 60 is an N6-acetyllysine (K60). H64 provides a ligand contact to heme b. An N6-acetyllysine modification is found at K83. H93 lines the heme b pocket. The residue at position 94 (C94) is an S-nitrosocysteine.

It belongs to the globin family. As to quaternary structure, heterotetramer of two alpha chains and two beta chains. In terms of tissue distribution, red blood cells.

Involved in oxygen transport from the lung to the various peripheral tissues. The polypeptide is Hemoglobin subunit beta (HBB) (Panthera pardus orientalis (Amur leopard)).